A 573-amino-acid chain; its full sequence is Proline--tRNA ligase (573 aa).

Belongs to the class-II aminoacyl-tRNA synthetase family. ProS type 1 subfamily. In terms of assembly, homodimer.

It is found in the cytoplasm. It carries out the reaction tRNA(Pro) + L-proline + ATP = L-prolyl-tRNA(Pro) + AMP + diphosphate. Its function is as follows. Catalyzes the attachment of proline to tRNA(Pro) in a two-step reaction: proline is first activated by ATP to form Pro-AMP and then transferred to the acceptor end of tRNA(Pro). As ProRS can inadvertently accommodate and process non-cognate amino acids such as alanine and cysteine, to avoid such errors it has two additional distinct editing activities against alanine. One activity is designated as 'pretransfer' editing and involves the tRNA(Pro)-independent hydrolysis of activated Ala-AMP. The other activity is designated 'posttransfer' editing and involves deacylation of mischarged Ala-tRNA(Pro). The misacylated Cys-tRNA(Pro) is not edited by ProRS. The polypeptide is Proline--tRNA ligase (Moorella thermoacetica (strain ATCC 39073 / JCM 9320)).